The chain runs to 275 residues: T-cell ecto-ADP-ribosyltransferase 1 (275 aa).

The first 20 residues, 1 to 20 (MPSNICKFFLTWWLIQQVTG), serve as a signal peptide directing secretion. 2 cysteine pairs are disulfide-bonded: C41–C243 and C141–C193. N58 is a glycosylation site (N-linked (GlcNAc...) asparagine). The region spanning 61 to 238 (EKLKVAWEEA…IFLDSPKRKK (178 aa)) is the TR mART core domain. NAD(+) contacts are provided by Y98, R146, and Q164. Residue R146 is part of the active site. Residue S167 is part of the active site. Residue S202 coordinates NAD(+). The active site involves E209. A lipid anchor (GPI-anchor amidated serine) is attached at S246. Positions 247–275 (SAGTRESCVSLFLVVLTSLLVQLLCLAEP) are cleaved as a propeptide — removed in mature form.

This sequence belongs to the Arg-specific ADP-ribosyltransferase family. As to expression, postthymic T-cells.

The protein resides in the cell membrane. It carries out the reaction L-arginyl-[protein] + NAD(+) = N(omega)-(ADP-D-ribosyl)-L-arginyl-[protein] + nicotinamide + H(+). The catalysed reaction is NAD(+) + H2O = ADP-D-ribose + nicotinamide + H(+). Has NAD(+) glycohydrolase activity and extremely low ADP-ribosyltransferase activity. The polypeptide is T-cell ecto-ADP-ribosyltransferase 1 (Art2a) (Rattus norvegicus (Rat)).